A 338-amino-acid polypeptide reads, in one-letter code: DNA-directed RNA polymerase subunit alpha (338 aa).

The interval 1–234 (MIQKNWQELI…DQLQLFINFE (234 aa)) is alpha N-terminal domain (alpha-NTD). The tract at residues 250–338 (FNKNLLRKVD…ELAKKLEEPY (89 aa)) is alpha C-terminal domain (alpha-CTD).

This sequence belongs to the RNA polymerase alpha chain family. In terms of assembly, homodimer. The RNAP catalytic core consists of 2 alpha, 1 beta, 1 beta' and 1 omega subunit. When a sigma factor is associated with the core the holoenzyme is formed, which can initiate transcription.

The enzyme catalyses RNA(n) + a ribonucleoside 5'-triphosphate = RNA(n+1) + diphosphate. DNA-dependent RNA polymerase catalyzes the transcription of DNA into RNA using the four ribonucleoside triphosphates as substrates. The protein is DNA-directed RNA polymerase subunit alpha of Paramagnetospirillum magneticum (strain ATCC 700264 / AMB-1) (Magnetospirillum magneticum).